We begin with the raw amino-acid sequence, 356 residues long: tRNA N6-adenosine threonylcarbamoyltransferase (356 aa).

Fe cation-binding residues include His115 and His119. Residues 138 to 142, Asp171, Gly184, and Asn283 each bind substrate; that span reads LVSGG. Fe cation is bound at residue Asp311.

The protein belongs to the KAE1 / TsaD family. It depends on Fe(2+) as a cofactor.

Its subcellular location is the cytoplasm. The enzyme catalyses L-threonylcarbamoyladenylate + adenosine(37) in tRNA = N(6)-L-threonylcarbamoyladenosine(37) in tRNA + AMP + H(+). Functionally, required for the formation of a threonylcarbamoyl group on adenosine at position 37 (t(6)A37) in tRNAs that read codons beginning with adenine. Is involved in the transfer of the threonylcarbamoyl moiety of threonylcarbamoyl-AMP (TC-AMP) to the N6 group of A37, together with TsaE and TsaB. TsaD likely plays a direct catalytic role in this reaction. This is tRNA N6-adenosine threonylcarbamoyltransferase from Prochlorococcus marinus (strain NATL1A).